The chain runs to 202 residues: ATP synthase subunit b 1 (202 aa).

Residues 17–37 (IAAVLCFSVLVPLVAMAAEGG) traverse the membrane as a helical segment.

This sequence belongs to the ATPase B chain family. In terms of assembly, F-type ATPases have 2 components, F(1) - the catalytic core - and F(0) - the membrane proton channel. F(1) has five subunits: alpha(3), beta(3), gamma(1), delta(1), epsilon(1). F(0) has three main subunits: a(1), b(2) and c(10-14). The alpha and beta chains form an alternating ring which encloses part of the gamma chain. F(1) is attached to F(0) by a central stalk formed by the gamma and epsilon chains, while a peripheral stalk is formed by the delta and b chains.

Its subcellular location is the cell inner membrane. Its function is as follows. F(1)F(0) ATP synthase produces ATP from ADP in the presence of a proton or sodium gradient. F-type ATPases consist of two structural domains, F(1) containing the extramembraneous catalytic core and F(0) containing the membrane proton channel, linked together by a central stalk and a peripheral stalk. During catalysis, ATP synthesis in the catalytic domain of F(1) is coupled via a rotary mechanism of the central stalk subunits to proton translocation. In terms of biological role, component of the F(0) channel, it forms part of the peripheral stalk, linking F(1) to F(0). This Syntrophus aciditrophicus (strain SB) protein is ATP synthase subunit b 1.